The following is a 478-amino-acid chain: Sialidase-4 (478 aa).

The FRIP motif signature appears at 22–25; it reads YRVP. Arginine 23 and arginine 43 together coordinate substrate. Active-site proton acceptor residues include aspartate 47 and aspartate 48. Residues 127 to 138 form a BNR 1 repeat; sequence VTSCDAGLTWGS. Substrate-binding residues include tyrosine 177 and tyrosine 179. The stretch at 200–211 is one BNR 2 repeat; that stretch reads FYSDDHGISWHC. Substrate contacts are provided by glutamate 222 and arginine 238. The BNR 3 repeat unit spans residues 247 to 258; the sequence is ALSADEGTSFLP. Disordered stretches follow at residues 285 to 307 and 335 to 359; these read IEPQDDRWTGSPRNTPHSPCFNL and SRSPENHGLEPGSDGDKTSWTPECP. Position 383 (arginine 383) interacts with substrate. Residue tyrosine 413 is the Nucleophile of the active site. Glutamate 434 is a catalytic residue.

This sequence belongs to the glycosyl hydrolase 33 family. Highly expressed in brain, particularly in hippocampus, and at lower levels in liver and spleen. Expressed in hippocampal neurons (at protein level).

It is found in the cell membrane. Its subcellular location is the endoplasmic reticulum membrane. The protein resides in the microsome membrane. The protein localises to the mitochondrion inner membrane. It localises to the mitochondrion outer membrane. It is found in the cell projection. Its subcellular location is the neuron projection. The protein resides in the lysosome lumen. It catalyses the reaction Hydrolysis of alpha-(2-&gt;3)-, alpha-(2-&gt;6)-, alpha-(2-&gt;8)- glycosidic linkages of terminal sialic acid residues in oligosaccharides, glycoproteins, glycolipids, colominic acid and synthetic substrates.. The catalysed reaction is a ganglioside GM3 + H2O = a beta-D-galactosyl-(1-&gt;4)-beta-D-glucosyl-(1&lt;-&gt;1)-ceramide + N-acetylneuraminate. It carries out the reaction a ganglioside GM3 (d18:1(4E)) + H2O = a beta-D-Gal-(1-&gt;4)-beta-D-Glc-(1&lt;-&gt;1)-Cer(d18:1(4E)) + N-acetylneuraminate. The enzyme catalyses a ganglioside GM2 + H2O = a ganglioside GA2 + N-acetylneuraminate. It catalyses the reaction a ganglioside GM2 (d18:1(4E)) + H2O = a ganglioside GA2 (d18:1(4E)) + N-acetylneuraminate. The catalysed reaction is a ganglioside GD1a + H2O = a ganglioside GM1 + N-acetylneuraminate. It carries out the reaction a ganglioside GD1a (d18:1(4E)) + H2O = a ganglioside GM1 (d18:1(4E)) + N-acetylneuraminate. The enzyme catalyses a ganglioside GD3 + H2O = a ganglioside GM3 + N-acetylneuraminate. It catalyses the reaction a ganglioside GD3 (d18:1(4E)) + H2O = a ganglioside GM3 (d18:1(4E)) + N-acetylneuraminate. In terms of biological role, exo-alpha-sialidase that catalyzes the hydrolytic cleavage of the terminal sialic acid (N-acetylneuraminic acid, Neu5Ac) of a glycan moiety in the catabolism of glycolipids, glycoproteins and oligosacharides. Efficiently hydrolyzes gangliosides including alpha-(2-&gt;3)-sialylated GD1a and GM3 and alpha-(2-&gt;8)-sialylated GD3. Hydrolyzes poly-alpha-(2-&gt;8)-sialylated neural cell adhesion molecule NCAM1 likely at growth cones, suppressing neurite outgrowth in hippocampal neurons. May desialylate sialyl Lewis A and X antigens at the cell surface, down-regulating these glycan epitopes recognized by SELE/E selectin in the initiation of cell adhesion and extravasation. Has sialidase activity toward mucin, fetuin and sialyllactose. This chain is Sialidase-4 (Neu4), found in Mus musculus (Mouse).